A 463-amino-acid chain; its full sequence is Chromosomal replication initiator protein DnaA (463 aa).

A domain I, interacts with DnaA modulators region spans residues 1–83 (MSLSLWQQCL…LRFEVGSKPI (83 aa)). Residues 83-126 (IVPVAVSSAASSGASVPPAAVRASSLARPSWERVTAQPELSYRS) form a domain II region. A domain III, AAA+ region region spans residues 127–343 (NVNPKHTFDN…GALNRVIANA (217 aa)). ATP is bound by residues glycine 171, glycine 173, lysine 174, and threonine 175. The domain IV, binds dsDNA stretch occupies residues 344–463 (NFTGRAITID…FSNLIRTLSS (120 aa)).

It belongs to the DnaA family. As to quaternary structure, oligomerizes as a right-handed, spiral filament on DNA at oriC.

It is found in the cytoplasm. Plays an essential role in the initiation and regulation of chromosomal replication. ATP-DnaA binds to the origin of replication (oriC) to initiate formation of the DNA replication initiation complex once per cell cycle. Binds the DnaA box (a 9 base pair repeat at the origin) and separates the double-stranded (ds)DNA. Forms a right-handed helical filament on oriC DNA; dsDNA binds to the exterior of the filament while single-stranded (ss)DNA is stabiized in the filament's interior. The ATP-DnaA-oriC complex binds and stabilizes one strand of the AT-rich DNA unwinding element (DUE), permitting loading of DNA polymerase. After initiation quickly degrades to an ADP-DnaA complex that is not apt for DNA replication. Binds acidic phospholipids. The polypeptide is Chromosomal replication initiator protein DnaA (Edwardsiella ictaluri (strain 93-146)).